We begin with the raw amino-acid sequence, 445 residues long: Transcription activator AFTR-1 (445 aa).

The zn(2)-C6 fungal-type DNA-binding region spans Cys-17–Cys-44. Residues Arg-50–Gln-89 are disordered. Residues Arg-51–Arg-60 are compositionally biased toward basic residues. A compositionally biased stretch (polar residues) spans Pro-77–Gln-89.

The protein resides in the nucleus. Transcription factor that regulates the expression of the gene clusters that mediate the biosynthesis of the host-selective toxins (HSTs) AF-toxins responsible for Alternaria black spot of strawberry disease by the strawberry pathotype. On cellular level, AF-toxins affect plasma membrane of susceptible cells and cause a sudden increase in loss of K(+) after a few minutes of toxin treatment. The protein is Transcription activator AFTR-1 of Alternaria alternata (Alternaria rot fungus).